The sequence spans 344 residues: Biotin synthase (344 aa).

One can recognise a Radical SAM core domain in the interval 40–267; that stretch reads AEVQVSTLLS…KSMVRLSAGR (228 aa). Positions 55, 59, and 62 each coordinate [4Fe-4S] cluster. [2Fe-2S] cluster contacts are provided by Cys99, Cys130, Cys190, and Arg262.

This sequence belongs to the radical SAM superfamily. Biotin synthase family. As to quaternary structure, homodimer. [4Fe-4S] cluster is required as a cofactor. The cofactor is [2Fe-2S] cluster.

It carries out the reaction (4R,5S)-dethiobiotin + (sulfur carrier)-SH + 2 reduced [2Fe-2S]-[ferredoxin] + 2 S-adenosyl-L-methionine = (sulfur carrier)-H + biotin + 2 5'-deoxyadenosine + 2 L-methionine + 2 oxidized [2Fe-2S]-[ferredoxin]. The protein operates within cofactor biosynthesis; biotin biosynthesis; biotin from 7,8-diaminononanoate: step 2/2. Catalyzes the conversion of dethiobiotin (DTB) to biotin by the insertion of a sulfur atom into dethiobiotin via a radical-based mechanism. The chain is Biotin synthase from Xanthomonas oryzae pv. oryzae (strain PXO99A).